The following is a 198-amino-acid chain: UPF0314 protein Atu8092 (198 aa).

Transmembrane regions (helical) follow at residues 14 to 34 (LRWF…LYAM), 64 to 84 (WYTP…WLLF), and 150 to 170 (VPVW…GWLI).

This sequence belongs to the UPF0314 family.

The protein localises to the cell membrane. This chain is UPF0314 protein Atu8092, found in Agrobacterium fabrum (strain C58 / ATCC 33970) (Agrobacterium tumefaciens (strain C58)).